A 527-amino-acid polypeptide reads, in one-letter code: Bifunctional pantoate ligase/cytidylate kinase (527 aa).

The pantoate--beta-alanine ligase stretch occupies residues 1-277 (MRQLISPEAL…VGTARLIDNL (277 aa)). An ATP-binding site is contributed by 27–34 (MGALHAGH). H34 serves as the catalytic Proton donor. Residue Q58 participates in (R)-pantoate binding. Q58 provides a ligand contact to beta-alanine. 147–150 (GEKD) is an ATP binding site. Residue Q153 participates in (R)-pantoate binding. ATP is bound by residues V176 and 184 to 187 (LSSR). The cytidylate kinase stretch occupies residues 278-527 (TLQGRRPIIA…GQTPSPLSLG (250 aa)). Positions 507–527 (GLGDSSPQATPGQTPSPLSLG) are disordered. Over residues 511–527 (SSPQATPGQTPSPLSLG) the composition is skewed to polar residues.

The protein in the N-terminal section; belongs to the pantothenate synthetase family. It in the C-terminal section; belongs to the cytidylate kinase family. Type 1 subfamily.

The protein resides in the cytoplasm. It catalyses the reaction (R)-pantoate + beta-alanine + ATP = (R)-pantothenate + AMP + diphosphate + H(+). The catalysed reaction is CMP + ATP = CDP + ADP. The enzyme catalyses dCMP + ATP = dCDP + ADP. It participates in cofactor biosynthesis; (R)-pantothenate biosynthesis; (R)-pantothenate from (R)-pantoate and beta-alanine: step 1/1. Its function is as follows. Catalyzes the condensation of pantoate with beta-alanine in an ATP-dependent reaction via a pantoyl-adenylate intermediate. Catalyzes the transfer of a phosphate group from ATP to either CMP or dCMP to form CDP or dCDP and ADP, respectively. This is Bifunctional pantoate ligase/cytidylate kinase from Synechococcus elongatus (strain ATCC 33912 / PCC 7942 / FACHB-805) (Anacystis nidulans R2).